Reading from the N-terminus, the 879-residue chain is Alanine--tRNA ligase (879 aa).

Residues His567, His571, Cys669, and His673 each coordinate Zn(2+).

Belongs to the class-II aminoacyl-tRNA synthetase family. It depends on Zn(2+) as a cofactor.

The protein localises to the cytoplasm. It carries out the reaction tRNA(Ala) + L-alanine + ATP = L-alanyl-tRNA(Ala) + AMP + diphosphate. In terms of biological role, catalyzes the attachment of alanine to tRNA(Ala) in a two-step reaction: alanine is first activated by ATP to form Ala-AMP and then transferred to the acceptor end of tRNA(Ala). Also edits incorrectly charged Ser-tRNA(Ala) and Gly-tRNA(Ala) via its editing domain. This chain is Alanine--tRNA ligase, found in Lactobacillus acidophilus (strain ATCC 700396 / NCK56 / N2 / NCFM).